The primary structure comprises 253 residues: Ribonuclease HII (253 aa).

Residues 30–221 (GPVAGVDEVG…VRRLVVDGEP (192 aa)) form the RNase H type-2 domain. The a divalent metal cation site is built by Asp-36, Glu-37, and Asp-130.

Belongs to the RNase HII family. The cofactor is Mn(2+). Mg(2+) is required as a cofactor.

It localises to the cytoplasm. The catalysed reaction is Endonucleolytic cleavage to 5'-phosphomonoester.. In terms of biological role, endonuclease that specifically degrades the RNA of RNA-DNA hybrids. This Mycolicibacterium gilvum (strain PYR-GCK) (Mycobacterium gilvum (strain PYR-GCK)) protein is Ribonuclease HII.